The primary structure comprises 308 residues: tRNA pseudouridine synthase B (308 aa).

The active-site Nucleophile is Asp45.

Belongs to the pseudouridine synthase TruB family. Type 1 subfamily.

It carries out the reaction uridine(55) in tRNA = pseudouridine(55) in tRNA. Responsible for synthesis of pseudouridine from uracil-55 in the psi GC loop of transfer RNAs. The chain is tRNA pseudouridine synthase B from Gloeothece citriformis (strain PCC 7424) (Cyanothece sp. (strain PCC 7424)).